The chain runs to 295 residues: Bifunctional protein FolD (295 aa).

NADP(+)-binding positions include 165–167, serine 190, and isoleucine 231; that span reads GRS.

The protein belongs to the tetrahydrofolate dehydrogenase/cyclohydrolase family. In terms of assembly, homodimer.

The catalysed reaction is (6R)-5,10-methylene-5,6,7,8-tetrahydrofolate + NADP(+) = (6R)-5,10-methenyltetrahydrofolate + NADPH. It catalyses the reaction (6R)-5,10-methenyltetrahydrofolate + H2O = (6R)-10-formyltetrahydrofolate + H(+). It functions in the pathway one-carbon metabolism; tetrahydrofolate interconversion. Its function is as follows. Catalyzes the oxidation of 5,10-methylenetetrahydrofolate to 5,10-methenyltetrahydrofolate and then the hydrolysis of 5,10-methenyltetrahydrofolate to 10-formyltetrahydrofolate. In Nitrosomonas europaea (strain ATCC 19718 / CIP 103999 / KCTC 2705 / NBRC 14298), this protein is Bifunctional protein FolD.